The primary structure comprises 261 residues: tRNA pseudouridine synthase A 2 (261 aa).

The active-site Nucleophile is the D59. Position 117 (Y117) interacts with substrate.

This sequence belongs to the tRNA pseudouridine synthase TruA family. In terms of assembly, homodimer.

It carries out the reaction uridine(38/39/40) in tRNA = pseudouridine(38/39/40) in tRNA. Its function is as follows. Formation of pseudouridine at positions 38, 39 and 40 in the anticodon stem and loop of transfer RNAs. The polypeptide is tRNA pseudouridine synthase A 2 (Desulfotalea psychrophila (strain LSv54 / DSM 12343)).